Here is a 221-residue protein sequence, read N- to C-terminus: 7-cyano-7-deazaguanine synthase (221 aa).

10–20 (FSGGQDSTTCL) provides a ligand contact to ATP. Zn(2+) contacts are provided by cysteine 186, cysteine 195, cysteine 198, and cysteine 201.

The protein belongs to the QueC family. As to quaternary structure, homodimer. Requires Zn(2+) as cofactor.

It carries out the reaction 7-carboxy-7-deazaguanine + NH4(+) + ATP = 7-cyano-7-deazaguanine + ADP + phosphate + H2O + H(+). It functions in the pathway purine metabolism; 7-cyano-7-deazaguanine biosynthesis. In terms of biological role, catalyzes the ATP-dependent conversion of 7-carboxy-7-deazaguanine (CDG) to 7-cyano-7-deazaguanine (preQ(0)). The chain is 7-cyano-7-deazaguanine synthase from Geobacillus kaustophilus (strain HTA426).